We begin with the raw amino-acid sequence, 698 residues long: Voltage-dependent calcium channel beta subunit-associated regulatory protein (698 aa).

The Extracellular portion of the chain corresponds to 1–41; it reads MQPTATMATAAATTATVALTTSWDNATSRPTAEPDPILDNY. Asn-25 carries an N-linked (GlcNAc...) asparagine glycan. The chain crosses the membrane as a helical; Signal-anchor for type III membrane protein span at residues 42 to 62; that stretch reads VLLVVVMSLFVGGTLVVLSGV. Residues 63 to 698 lie on the Cytoplasmic side of the membrane; that stretch reads LLLCKRCWEV…APTSPDHSPA (636 aa). 2 disordered regions span residues 90-124 and 185-275; these read YLDNGTHPIQDPDCRGEDPEGQDTETERFLATSST and ASAA…SSGS. Residues 185–197 show a composition bias toward low complexity; the sequence is ASAAATPHPATTS. Residues Ser-290 and Ser-295 each carry the phosphoserine modification. Disordered regions lie at residues 308 to 339, 360 to 421, 438 to 536, and 554 to 648; these read SQRASSLDTRGSPKRHHFQRQRAASESMEQEG, PPPR…HAQC, ATAS…RRDY, and PHFD…GSGL. Residues 360-375 show a composition bias toward pro residues; it reads PPPRPFLASPTSPPPT. Residues 402–413 show a composition bias toward low complexity; the sequence is PEHAQQQDPQQE. Positions 459–468 are enriched in gly residues; that stretch reads SGSGSGGGGA. Pro residues predominate over residues 471-482; that stretch reads AFPPPPESPPAL. The span at 483–493 shows a compositional bias: basic and acidic residues; that stretch reads RPKDGEARRLL. Residues Ser-501, Ser-520, and Ser-524 each carry the phosphoserine modification. A compositionally biased stretch (basic residues) spans 562–576; the sequence is HRTRAHPHTHARKQW. Position 610 is a phosphoserine (Ser-610). Phosphothreonine is present on Thr-691. Residues Ser-692 and Ser-696 each carry the phosphoserine modification.

Interacts with voltage-dependent calcium channels CACNB1, CACNB2, CACNB3 and CACNB4 beta subunits; prevents their interaction with the CACNA1C alpha subunit thereby negatively regulating the activity of the corresponding calcium channels. Expressed by neurons in the cortex, cerebellum and hippocampus and by pancreatic beta cells (at protein level).

It localises to the cytoplasmic vesicle. Its subcellular location is the secretory vesicle. The protein localises to the synaptic vesicle membrane. It is found in the cell membrane. The protein resides in the cell projection. It localises to the growth cone. In terms of biological role, negatively regulates voltage-gated calcium channels by preventing the interaction between their alpha and beta subunits. Thereby, negatively regulates calcium channels activity at the plasma membrane and indirectly inhibits calcium-regulated exocytosis. The chain is Voltage-dependent calcium channel beta subunit-associated regulatory protein from Mus musculus (Mouse).